Consider the following 704-residue polypeptide: Phytyl ester synthase 1, chloroplastic (704 aa).

The N-terminal 27 residues, 1-27 (MATCSSSLLVLPNLRLSSNQRRNFKVR), are a transit peptide targeting the chloroplast.

The protein belongs to the diacylglycerol acyltransferase family. In terms of assembly, interacts with PGM48. Mostly expressed in flowers (e.g. sepals, petals and stamen).

The protein localises to the plastid. Its subcellular location is the chloroplast. It is found in the plastoglobule. It carries out the reaction a 1,2-diacyl-3-O-(beta-D-galactosyl)-sn-glycerol + a 1,2-diacylglycerol = an acyl-3-O-(beta-D-galactosyl)-sn-glycerol + a triacylglycerol. The enzyme catalyses a 1,2-diacylglycerol + a fatty acyl-CoA = a triacylglycerol + CoA. The catalysed reaction is a fatty acyl-[ACP] + a 1,2-diacylglycerol = a triacylglycerol + holo-[ACP]. It catalyses the reaction phytol + a fatty acyl-CoA = a fatty acid phytyl ester + CoA. It carries out the reaction phytol + tetradecanoyl-CoA = tetradecanoate phytyl ester + CoA. The enzyme catalyses a 1,3-diacylglycerol + a fatty acyl-CoA = a triacylglycerol + CoA. The catalysed reaction is 1,2-dihexanoylglycerol + tetradecanoyl-CoA = 1,2-dihexanoyl-3-tetradecanoylglycerol + CoA. It catalyses the reaction 1,2-dihexanoylglycerol + hexadecanoyl-CoA = 1,2-dihexanoyl-3-hexadecanoylglycerol + CoA. It carries out the reaction 1,2-dihexanoylglycerol + octadecanoyl-CoA = 1,2-dihexanoyl-3-octadecanoylglycerol + CoA. The enzyme catalyses (7Z,10Z,13Z)-hexadecatrienoyl-CoA + 1,2-dihexanoylglycerol = 1,2-dihexanoyl-3-(7Z,10Z,13Z-hexadecatrienoyl)-glycerol + CoA. The catalysed reaction is 1,2-dihexanoylglycerol + (9Z)-octadecenoyl-CoA = 1,2-dihexanoyl-3-(9Z-octadecenoyl)-glycerol + CoA. It catalyses the reaction 1,2-dihexanoylglycerol + (9Z,12Z,15Z)-octadecatrienoyl-CoA = 1,2-dihexanoyl-3-(9Z,12Z,15Z-octadecatrienoyl)-glycerol + CoA. It carries out the reaction phytol + decanoyl-CoA = decanoate phytyl ester + CoA. The enzyme catalyses (7Z,10Z,13Z)-hexadecatrienoyl-CoA + phytol = (7Z,10Z,13Z)-hexadecatrienoate phytyl ester + CoA. The catalysed reaction is phytol + dodecanoyl-CoA = dodecanoate phytyl ester + CoA. Functionally, acyltransferase involved in fatty acid phytyl ester synthesis in chloroplasts, a process required for the maintenance of the photosynthetic membrane integrity during abiotic stress and senescence. Exhibits phytyl ester synthesis and diacylglycerol acyltransferase activities with broad substrate specificities, and can employ acyl-CoAs, acyl carrier proteins, and galactolipids as acyl donors. The sequence is that of Phytyl ester synthase 1, chloroplastic from Arabidopsis thaliana (Mouse-ear cress).